The primary structure comprises 540 residues: Chaperonin GroEL 2 (540 aa).

ATP-binding positions include 29–32 (TLGP), 86–90 (DGTTT), G413, and D492. Residues 521–540 (KPEKEKASVPGGGDMGGMDF) form a disordered region. Residues 530 to 540 (PGGGDMGGMDF) show a composition bias toward gly residues.

This sequence belongs to the chaperonin (HSP60) family. As to quaternary structure, forms a cylinder of 14 subunits composed of two heptameric rings stacked back-to-back. Interacts with the co-chaperonin GroES.

The protein resides in the secreted. The protein localises to the capsule. It is found in the cell surface. Its subcellular location is the cell wall. The enzyme catalyses ATP + H2O + a folded polypeptide = ADP + phosphate + an unfolded polypeptide.. Its function is as follows. Together with its co-chaperonin GroES, plays an essential role in assisting protein folding. The GroEL-GroES system forms a nano-cage that allows encapsulation of the non-native substrate proteins and provides a physical environment optimized to promote and accelerate protein folding. The polypeptide is Chaperonin GroEL 2 (Mycobacterium tuberculosis (strain ATCC 25177 / H37Ra)).